The chain runs to 313 residues: Ribosomal RNA small subunit methyltransferase H (313 aa).

S-adenosyl-L-methionine contacts are provided by residues 35–37, Asp-53, Phe-80, Asp-101, and Gln-108; that span reads GGY.

It belongs to the methyltransferase superfamily. RsmH family.

The protein localises to the cytoplasm. The enzyme catalyses cytidine(1402) in 16S rRNA + S-adenosyl-L-methionine = N(4)-methylcytidine(1402) in 16S rRNA + S-adenosyl-L-homocysteine + H(+). Its function is as follows. Specifically methylates the N4 position of cytidine in position 1402 (C1402) of 16S rRNA. The protein is Ribosomal RNA small subunit methyltransferase H of Acidiphilium cryptum (strain JF-5).